A 953-amino-acid chain; its full sequence is Dual serine/threonine and tyrosine protein kinase (953 aa).

A Protein kinase domain is found at 665–926 (PKLEREIGRG…VQSKLQDIYT (262 aa)). Residues 671–679 (IGRGQYGVV) and Lys694 contribute to the ATP site. The active-site Proton acceptor is Asp791. Positions 932–953 (REAEGGGGGGAKEQQNLKSDTL) are disordered.

This sequence belongs to the protein kinase superfamily. Ser/Thr protein kinase family.

The protein resides in the cytoplasm. The protein localises to the cell membrane. Its subcellular location is the apical cell membrane. It localises to the basolateral cell membrane. It is found in the cell junction. It carries out the reaction L-seryl-[protein] + ATP = O-phospho-L-seryl-[protein] + ADP + H(+). The catalysed reaction is L-threonyl-[protein] + ATP = O-phospho-L-threonyl-[protein] + ADP + H(+). It catalyses the reaction L-tyrosyl-[protein] + ATP = O-phospho-L-tyrosyl-[protein] + ADP + H(+). Its function is as follows. May act as a positive regulator of ERK phosphorylation downstream of fibroblast growth factor-receptor activation. May induce both caspase-dependent apoptosis and caspase-independent cell death. May play a role in the embryonic development. The chain is Dual serine/threonine and tyrosine protein kinase from Strongylocentrotus purpuratus (Purple sea urchin).